Consider the following 287-residue polypeptide: Bifunctional protein FolD (287 aa).

Residues 160-162 (GRS), Ser-189, and Thr-230 contribute to the NADP(+) site.

It belongs to the tetrahydrofolate dehydrogenase/cyclohydrolase family. As to quaternary structure, homodimer.

The enzyme catalyses (6R)-5,10-methylene-5,6,7,8-tetrahydrofolate + NADP(+) = (6R)-5,10-methenyltetrahydrofolate + NADPH. The catalysed reaction is (6R)-5,10-methenyltetrahydrofolate + H2O = (6R)-10-formyltetrahydrofolate + H(+). It participates in one-carbon metabolism; tetrahydrofolate interconversion. Functionally, catalyzes the oxidation of 5,10-methylenetetrahydrofolate to 5,10-methenyltetrahydrofolate and then the hydrolysis of 5,10-methenyltetrahydrofolate to 10-formyltetrahydrofolate. The polypeptide is Bifunctional protein FolD (Chlamydia trachomatis serovar D (strain ATCC VR-885 / DSM 19411 / UW-3/Cx)).